The chain runs to 237 residues: Eukaryotic translation initiation factor 3 subunit K (237 aa).

Positions 44-219 (CDCNANRALL…EARKAEIRED (176 aa)) constitute a PCI domain.

The protein belongs to the eIF-3 subunit K family. Component of the eukaryotic translation initiation factor 3 (eIF-3) complex.

The protein resides in the cytoplasm. Component of the eukaryotic translation initiation factor 3 (eIF-3) complex, which is involved in protein synthesis of a specialized repertoire of mRNAs and, together with other initiation factors, stimulates binding of mRNA and methionyl-tRNAi to the 40S ribosome. The eIF-3 complex specifically targets and initiates translation of a subset of mRNAs involved in cell proliferation. This is Eukaryotic translation initiation factor 3 subunit K from Neurospora crassa (strain ATCC 24698 / 74-OR23-1A / CBS 708.71 / DSM 1257 / FGSC 987).